An 87-amino-acid polypeptide reads, in one-letter code: U3-theraphotoxin-Cg1c (87 aa).

An N-terminal signal peptide occupies residues 1–23 (MRTFTLIAILTCAVLVIFHVSAA). A propeptide spanning residues 24-51 (EELEAQDVIQPEDIFTGVATLEEDRIFE) is cleaved from the precursor. Disulfide bonds link Cys52–Cys65, Cys56–Cys79, and Cys73–Cys84.

The protein belongs to the neurotoxin 12 (Hwtx-2) family. 03 (juruin) subfamily. Expressed by the venom gland.

It is found in the secreted. Functionally, probable ion channel inhibitor. The protein is U3-theraphotoxin-Cg1c of Chilobrachys guangxiensis (Chinese earth tiger tarantula).